The sequence spans 534 residues: Phenylalanine N-monooxygenase CYP79D16 (534 aa).

A signal peptide spans 1–21 (MEANVGFLTLCLAITLVRFLM). Position 472 (cysteine 472) interacts with heme. Asparagine 500 is a glycosylation site (N-linked (GlcNAc...) asparagine).

It belongs to the cytochrome P450 family. Requires heme as cofactor. As to expression, expressed in seedlings.

The enzyme catalyses L-phenylalanine + 2 reduced [NADPH--hemoprotein reductase] + 2 O2 = (E)-phenylacetaldehyde oxime + 2 oxidized [NADPH--hemoprotein reductase] + CO2 + 3 H2O + 2 H(+). In terms of biological role, involved in L-phenylalanine-derived cyanogenic glycoside biosynthesis, including prunasin and amygdalin defensive agents. Catalyzes the conversion of L-phenylalanine (Phe) into phenylacetaldoxime (PAOx). Cannot use tyrosine (Tyr), tryptophan (Trp) and valine (Val) as substrates. The sequence is that of Phenylalanine N-monooxygenase CYP79D16 from Prunus mume (Japanese apricot).